A 315-amino-acid chain; its full sequence is Probable cell division protein WhiA (315 aa).

A DNA-binding region (H-T-H motif) is located at residues 277–311; sequence SLQELGAMMPSGQISKSGVNHRLRKLNQIAEGYQQ.

It belongs to the WhiA family.

Functionally, involved in cell division and chromosome segregation. This Lacticaseibacillus paracasei (strain ATCC 334 / BCRC 17002 / CCUG 31169 / CIP 107868 / KCTC 3260 / NRRL B-441) (Lactobacillus paracasei) protein is Probable cell division protein WhiA.